Consider the following 604-residue polypeptide: Tyrosine-protein kinase transforming protein erbB (604 aa).

A Protein kinase domain is found at 132–399 (FKKVKVLGSG…KMARDPPRYL (268 aa)). Residues 138-146 (LGSGAFGTI) and lysine 165 each bind ATP. Aspartate 257 acts as the Proton acceptor in catalysis.

This sequence belongs to the protein kinase superfamily. Tyr protein kinase family. EGF receptor subfamily.

The catalysed reaction is L-tyrosyl-[protein] + ATP = O-phospho-L-tyrosyl-[protein] + ADP + H(+). In terms of biological role, the v-erbB oncogene transforms avian fibroblasts and erythroblasts in culture and induces sarcomas and erythroleukemias in chickens. It is a truncated and mutated version of the receptor for epidermal growth factor. The chain is Tyrosine-protein kinase transforming protein erbB (V-ERBB) from Galliformes.